The following is a 47-amino-acid chain: Potassium channel toxin gamma-KTx 5.1 (47 aa).

Intrachain disulfides connect C5–C23, C11–C34, C20–C39, and C24–C41.

The protein belongs to the ergtoxin family. Gamma-KTx 5 subfamily. In terms of tissue distribution, expressed by the venom gland.

It localises to the secreted. Reversibly blocks Kv11/ERG potassium channels. The chain is Potassium channel toxin gamma-KTx 5.1 from Centruroides sculpturatus (Arizona bark scorpion).